The primary structure comprises 118 residues: Large ribosomal subunit protein bL19 (118 aa).

Belongs to the bacterial ribosomal protein bL19 family.

Its function is as follows. This protein is located at the 30S-50S ribosomal subunit interface and may play a role in the structure and function of the aminoacyl-tRNA binding site. This chain is Large ribosomal subunit protein bL19, found in Metamycoplasma arthritidis (strain 158L3-1) (Mycoplasma arthritidis).